Reading from the N-terminus, the 489-residue chain is Cytochrome P450 monooxygenase AMT3 (489 aa).

A helical transmembrane segment spans residues 292–312 (LFMVAGTETTITALSGLVFLL). Cys436 serves as a coordination point for heme.

The protein belongs to the cytochrome P450 family. It depends on heme as a cofactor.

It localises to the membrane. The protein operates within mycotoxin biosynthesis. Its function is as follows. Cytochrome P450 monooxygenase; part of the gene clusters that mediate the biosynthesis of AM-toxins, host-selective toxins (HSTs) causing Alternaria blotch on apple, a worldwide distributed disease. AM-toxins are cyclic depsipeptides containing the 3 residues 2-hydroxy-isovaleric acid (2-HIV), dehydroalanine, L-alanine which are common for all 3 AM-toxins I to III. The fourth precursor is L-alpha-amino-methoxyphenyl-valeric acid (L-Amv) for AM-toxin I, L-alpha-amino-phenyl-valeric acid (L-Apv) for AM-toxin II, and L-alpha-amino-hydroxyphenyl-valeric acid (L-Ahv) for AM-toxin III. AM-toxins have two target sites for affecting susceptible apple cells; they cause invagination of the plasma membrane and electrolyte loss and chloroplast disorganization. The non-ribosomal peptide synthetase AMT1 contains 4 catalytic modules and is responsible for activation of each residue in AM-toxin. The aldo-keto reductase AMT2 catalyzes the conversion of 2-keto-isovaleric acid (2-KIV) to 2-hydroxy-isovaleric acid (2-HIV), one of the precursor residues incorporated by AMT1 during AM-toxin biosynthesis, by reduction of its ketone to an alcohol. The cytochrome P450 monooxygenase AMT3 and the thioesterase AMT4 are also important for AM-toxin production, but their exact function within the AM-toxin biosynthesis are not known yet. Up to 21 proteins (including AMT1 to AMT4) are predicted to be involved in AM-toxin biosynthesis since their expression ishighly up-regulated in AM-toxin-producing cultures. This Alternaria alternata (Alternaria rot fungus) protein is Cytochrome P450 monooxygenase AMT3.